We begin with the raw amino-acid sequence, 341 residues long: tRNA N6-adenosine threonylcarbamoyltransferase (341 aa).

Residues His-111 and His-115 each coordinate Fe cation. Substrate-binding positions include 134 to 138, Asp-167, Gly-180, and Asn-276; that span reads LVSGG. Asp-304 is a Fe cation binding site.

The protein belongs to the KAE1 / TsaD family. It depends on Fe(2+) as a cofactor.

The protein localises to the cytoplasm. It carries out the reaction L-threonylcarbamoyladenylate + adenosine(37) in tRNA = N(6)-L-threonylcarbamoyladenosine(37) in tRNA + AMP + H(+). Its function is as follows. Required for the formation of a threonylcarbamoyl group on adenosine at position 37 (t(6)A37) in tRNAs that read codons beginning with adenine. Is involved in the transfer of the threonylcarbamoyl moiety of threonylcarbamoyl-AMP (TC-AMP) to the N6 group of A37, together with TsaE and TsaB. TsaD likely plays a direct catalytic role in this reaction. In Pseudomonas aeruginosa (strain UCBPP-PA14), this protein is tRNA N6-adenosine threonylcarbamoyltransferase.